The primary structure comprises 170 residues: Adenine phosphoribosyltransferase (170 aa).

Belongs to the purine/pyrimidine phosphoribosyltransferase family. As to quaternary structure, homodimer.

It is found in the cytoplasm. The enzyme catalyses AMP + diphosphate = 5-phospho-alpha-D-ribose 1-diphosphate + adenine. It participates in purine metabolism; AMP biosynthesis via salvage pathway; AMP from adenine: step 1/1. Its function is as follows. Catalyzes a salvage reaction resulting in the formation of AMP, that is energically less costly than de novo synthesis. The polypeptide is Adenine phosphoribosyltransferase (Bacillus subtilis (strain 168)).